A 385-amino-acid polypeptide reads, in one-letter code: MDSPSSVSSYSSYSLSSSFPTSPVNSDFGFPSDSEREDKGAHGPRPDTVGQRGGSRPSPGPIRCRHRSKVSGNQHTPSHPKQRGSASPMAGSGAKRSRDGELETSLNTQGCTTEGDLLFAQKCKELQGFIPPLTDLLNGLKMGRFERGLSSFQQSVAMDRIQRIVGVLQKPQMGERYLGTLLQVEGMLKTWFPQIAAQKSSLGGGKHQLTKHFPSHHSDSAASSPASPMEKMDQTQLGHLALKPKQPWHLTQWPAMNLTWIHTTPICNPPLSSPGTISFSHGPLGTGTGIGVILFLQHGVQPFTHSAPTTPVPPTTASPVIPGEPMKLSGEGPRCYSLPVTLPSDWSYTLSPPSLPTLARKMTIGHREQQRSHPPVAADAHLLNL.

The span at 1–26 shows a compositional bias: low complexity; it reads MDSPSSVSSYSSYSLSSSFPTSPVNS. 3 disordered regions span residues 1-108, 203-233, and 365-385; these read MDSP…SLNT, GGGK…EKMD, and GHRE…LLNL. The span at 33 to 45 shows a compositional bias: basic and acidic residues; it reads DSEREDKGAHGPR. Over residues 70-79 the composition is skewed to polar residues; sequence VSGNQHTPSH.

In terms of assembly, interacts with PER2, CRY2, BHLHE41, HDAC1 and NR3C1. Interacts with BMAL1.

It is found in the nucleus. The protein localises to the PML body. Its function is as follows. Transcriptional repressor which forms a negative regulatory component of the circadian clock and acts independently of the circadian transcriptional repressors: CRY1, CRY2 and BHLHE41. In a histone deacetylase-dependent manner represses the transcriptional activator activity of the CLOCK-BMAL1 heterodimer. Abrogates the interaction of BMAL1 with the transcriptional coactivator CREBBP and can repress the histone acetyl-transferase activity of the CLOCK-BMAL1 heterodimer, reducing histone acetylation of its target genes. Rhythmically binds the E-box elements (5'-CACGTG-3') on circadian gene promoters and its occupancy shows circadian oscillation antiphasic to BMAL1. Interacts with the glucocorticoid receptor (NR3C1) and contributes to the repressive function in the glucocorticoid response. The polypeptide is Circadian-associated transcriptional repressor (CIART) (Homo sapiens (Human)).